The following is a 986-amino-acid chain: Bifunctional glutamine synthetase adenylyltransferase/adenylyl-removing enzyme (986 aa).

Residues 1–475 form an adenylyl removase region; that stretch reads MSFPLAHVDA…VFDHLIGEEK (475 aa). The segment at 481–986 is adenylyl transferase; the sequence is TETLWHDFLE…LFEHNDKYEE (506 aa).

The protein belongs to the GlnE family. The cofactor is Mg(2+).

The enzyme catalyses [glutamine synthetase]-O(4)-(5'-adenylyl)-L-tyrosine + phosphate = [glutamine synthetase]-L-tyrosine + ADP. It carries out the reaction [glutamine synthetase]-L-tyrosine + ATP = [glutamine synthetase]-O(4)-(5'-adenylyl)-L-tyrosine + diphosphate. Involved in the regulation of glutamine synthetase GlnA, a key enzyme in the process to assimilate ammonia. When cellular nitrogen levels are high, the C-terminal adenylyl transferase (AT) inactivates GlnA by covalent transfer of an adenylyl group from ATP to specific tyrosine residue of GlnA, thus reducing its activity. Conversely, when nitrogen levels are low, the N-terminal adenylyl removase (AR) activates GlnA by removing the adenylyl group by phosphorolysis, increasing its activity. The regulatory region of GlnE binds the signal transduction protein PII (GlnB) which indicates the nitrogen status of the cell. The sequence is that of Bifunctional glutamine synthetase adenylyltransferase/adenylyl-removing enzyme from Pasteurella multocida (strain Pm70).